The following is a 263-amino-acid chain: Hydroxyethylthiazole kinase (263 aa).

M39 is a substrate binding site. Residues K115 and T160 each coordinate ATP. Residue G187 coordinates substrate.

The protein belongs to the Thz kinase family. Mg(2+) is required as a cofactor.

It carries out the reaction 5-(2-hydroxyethyl)-4-methylthiazole + ATP = 4-methyl-5-(2-phosphooxyethyl)-thiazole + ADP + H(+). Its pathway is cofactor biosynthesis; thiamine diphosphate biosynthesis; 4-methyl-5-(2-phosphoethyl)-thiazole from 5-(2-hydroxyethyl)-4-methylthiazole: step 1/1. Functionally, catalyzes the phosphorylation of the hydroxyl group of 4-methyl-5-beta-hydroxyethylthiazole (THZ). The chain is Hydroxyethylthiazole kinase from Staphylococcus aureus (strain COL).